Here is a 177-residue protein sequence, read N- to C-terminus: NADH-quinone oxidoreductase subunit B (177 aa).

Cys53, Cys54, Cys118, and Cys148 together coordinate [4Fe-4S] cluster.

Belongs to the complex I 20 kDa subunit family. In terms of assembly, NDH-1 is composed of 14 different subunits. Subunits NuoB, C, D, E, F, and G constitute the peripheral sector of the complex. It depends on [4Fe-4S] cluster as a cofactor.

The protein resides in the cell membrane. It carries out the reaction a quinone + NADH + 5 H(+)(in) = a quinol + NAD(+) + 4 H(+)(out). Functionally, NDH-1 shuttles electrons from NADH, via FMN and iron-sulfur (Fe-S) centers, to quinones in the respiratory chain. The immediate electron acceptor for the enzyme in this species is believed to be a menaquinone. Couples the redox reaction to proton translocation (for every two electrons transferred, four hydrogen ions are translocated across the cytoplasmic membrane), and thus conserves the redox energy in a proton gradient. This chain is NADH-quinone oxidoreductase subunit B, found in Anoxybacillus flavithermus (strain DSM 21510 / WK1).